A 494-amino-acid polypeptide reads, in one-letter code: Aspartyl/glutamyl-tRNA(Asn/Gln) amidotransferase subunit B (494 aa).

Belongs to the GatB/GatE family. GatB subfamily. In terms of assembly, heterotrimer of A, B and C subunits.

The enzyme catalyses L-glutamyl-tRNA(Gln) + L-glutamine + ATP + H2O = L-glutaminyl-tRNA(Gln) + L-glutamate + ADP + phosphate + H(+). It catalyses the reaction L-aspartyl-tRNA(Asn) + L-glutamine + ATP + H2O = L-asparaginyl-tRNA(Asn) + L-glutamate + ADP + phosphate + 2 H(+). Allows the formation of correctly charged Asn-tRNA(Asn) or Gln-tRNA(Gln) through the transamidation of misacylated Asp-tRNA(Asn) or Glu-tRNA(Gln) in organisms which lack either or both of asparaginyl-tRNA or glutaminyl-tRNA synthetases. The reaction takes place in the presence of glutamine and ATP through an activated phospho-Asp-tRNA(Asn) or phospho-Glu-tRNA(Gln). The polypeptide is Aspartyl/glutamyl-tRNA(Asn/Gln) amidotransferase subunit B (Trichodesmium erythraeum (strain IMS101)).